Reading from the N-terminus, the 185-residue chain is Iodate reductase subunit IdrB (185 aa).

A signal peptide (tat-type signal) is located at residues 1–46 (MTTHPIHLHHDDPAHGGERACMSRRSFLLAGGAMVTLASLPGTAVA). One can recognise a Rieske domain in the interval 69–168 (GEPLEFAYPY…LEVRGDDIYA (100 aa)). The [2Fe-2S] cluster site is built by cysteine 109, histidine 111, cysteine 130, and histidine 133.

It belongs to the AOX family. The iodate reductase (Idr) complex is composed of a molybdopterin-dependent iodate reductase (IdrA and IdrB subunits) and two associated peroxidases (IdrP1 and IdrP2). It depends on [2Fe-2S] cluster as a cofactor. Predicted to be exported by the Tat system. The position of the signal peptide cleavage has not been experimentally proven.

The protein resides in the periplasm. Its function is as follows. Involved in iodate respiration. May accept electrons from cytochrome c551, and catalyze the reduction of iodate (IO(3)(-)) to produce the chemically unstable intermediate hypoiodous acid (HIO). This intermediate then undergoes abiotic disproportionation to yield two molecules of iodide (I(-)) and one molecule of iodate. The resultant iodate subsequently cycles back into the reductive pathway. The initial reduction of iodate may inadvertently produce low levels of incidental toxic H(2)O(2), which is detoxified by IdrP1 and IdrP2. The polypeptide is Iodate reductase subunit IdrB (Denitromonas iodatirespirans).